The chain runs to 191 residues: MSIDRKKLILEAATKSFTQFGYKATTMDLVAKLANVGKGTIYTFFKNKEELFDEIFTTLLKEMKQKADEAMEPSLPFHENVHRALFAILEFRKTHQLTIKIFQENAEIGTMAVQEVIQKMERSILSYIKSKIEDGIKSGAIKPCDPELTAFVMLKLYIALIFDWEKQHPPLDKETIAGLLELYVVKGLSAN.

One can recognise an HTH tetR-type domain in the interval 3–63 (IDRKKLILEA…EIFTTLLKEM (61 aa)). A DNA-binding region (H-T-H motif) is located at residues 26-45 (TMDLVAKLANVGKGTIYTFF).

This is an uncharacterized protein from Bacillus subtilis (strain 168).